The chain runs to 86 residues: Large ribosomal subunit protein uL23 (86 aa).

It belongs to the universal ribosomal protein uL23 family. In terms of assembly, part of the 50S ribosomal subunit. Contacts protein L29.

In terms of biological role, binds to 23S rRNA. One of the proteins that surrounds the polypeptide exit tunnel on the outside of the ribosome. This chain is Large ribosomal subunit protein uL23, found in Pyrococcus abyssi (strain GE5 / Orsay).